Reading from the N-terminus, the 101-residue chain is Large ribosomal subunit protein uL24 (101 aa).

It belongs to the universal ribosomal protein uL24 family. In terms of assembly, part of the 50S ribosomal subunit.

One of two assembly initiator proteins, it binds directly to the 5'-end of the 23S rRNA, where it nucleates assembly of the 50S subunit. Its function is as follows. One of the proteins that surrounds the polypeptide exit tunnel on the outside of the subunit. The polypeptide is Large ribosomal subunit protein uL24 (Borreliella burgdorferi (strain ATCC 35210 / DSM 4680 / CIP 102532 / B31) (Borrelia burgdorferi)).